The sequence spans 216 residues: Flagellin B3 (216 aa).

The propeptide occupies 1–11 (MLLDYIKSRRG).

It belongs to the archaeal flagellin family.

The protein resides in the archaeal flagellum. Flagellin is the subunit protein which polymerizes to form the filaments of archaeal flagella. The protein is Flagellin B3 (flaB3) of Methanocaldococcus jannaschii (strain ATCC 43067 / DSM 2661 / JAL-1 / JCM 10045 / NBRC 100440) (Methanococcus jannaschii).